A 225-amino-acid chain; its full sequence is Lipid A 4'-phosphatase (225 aa).

The next 6 membrane-spanning stretches (helical) occupy residues Ser29–Leu49, Asn51–Ala71, Phe110–Leu130, Leu136–Leu156, Gly160–Ala180, and Thr203–Val223.

This sequence belongs to the lipid A LpxF 4'-phosphatase family.

The protein localises to the cell inner membrane. It functions in the pathway bacterial outer membrane biogenesis; LPS lipid A biosynthesis. In terms of biological role, probably removes the 4'-phosphate group from lipid A. Removal of this phosphate group confers resistance to cationic antimicrobial peptides (CAMPs), inflammation-associated peptides produced by the human host. This LPS modification helps maintain the stability of this commensal bacterium in gut microbiota. The sequence is that of Lipid A 4'-phosphatase from Bacteroides thetaiotaomicron (strain ATCC 29148 / DSM 2079 / JCM 5827 / CCUG 10774 / NCTC 10582 / VPI-5482 / E50).